Here is a 1281-residue protein sequence, read N- to C-terminus: Zinc finger transcription factor Trps1 (1281 aa).

Disordered stretches follow at residues 1-101 (MVRK…VSFP) and 116-204 (PAAG…KGDL). Polar residues-rich tracts occupy residues 21-31 (LEPTATESKVS) and 40-49 (DQMSENTDQS). Residue Lys-29 forms a Glycyl lysine isopeptide (Lys-Gly) (interchain with G-Cter in SUMO2) linkage. Phosphoserine occurs at positions 90 and 127. The segment covering 148-162 (LETKEEHKMSPKATE) has biased composition (basic and acidic residues). A compositionally biased stretch (polar residues) spans 166–189 (PVQSGQANCQGLSPVSVASKNPQV). Phosphoserine occurs at positions 178 and 216. The C2H2-type 1; atypical zinc-finger motif lies at 222 to 247 (FKCNICGYGYYGNDPTDLIKHFRKYH). Residue Lys-263 forms a Glycyl lysine isopeptide (Lys-Gly) (interchain with G-Cter in SUMO2) linkage. Residues 333 to 358 (FRCKFCNFTYMGNSSTELEQHFLQTH) form a C2H2-type 2; atypical zinc finger. Residues 365–393 (SLPSSEGVKPSEKNSNKSIPALRASDSGD) are disordered. Glycyl lysine isopeptide (Lys-Gly) (interchain with G-Cter in SUMO2) cross-links involve residues Lys-418, Lys-457, Lys-474, and Lys-488. The segment at 484–515 (NDLAKSVEGEPLTKPEKGLSGAKKKDFPSKGA) is disordered. A compositionally biased stretch (basic and acidic residues) spans 488–515 (KSVEGEPLTKPEKGLSGAKKKDFPSKGA). The C2H2-type 3; atypical zinc finger occupies 614 to 637 (HQCHQCSFSTPDVDVLLFHYETVH). A mediates interaction with GLI3 region spans residues 635-819 (TVHESQASDV…SLGLLTPVSS (185 aa)). A Glycyl lysine isopeptide (Lys-Gly) (interchain with G-Cter in SUMO2) cross-link involves residue Lys-645. 2 C2H2-type zinc fingers span residues 666–689 (HSCT…RRAH) and 692–715 (YKCR…NTVH). Glycyl lysine isopeptide (Lys-Gly) (interchain with G-Cter in SUMO2) cross-links involve residues Lys-737 and Lys-755. Lys-766 participates in a covalent cross-link: Glycyl lysine isopeptide (Lys-Gly) (interchain with G-Cter in SUMO1); alternate. Lys-766 is covalently cross-linked (Glycyl lysine isopeptide (Lys-Gly) (interchain with G-Cter in SUMO2); alternate). Glycyl lysine isopeptide (Lys-Gly) (interchain with G-Cter in SUMO2) cross-links involve residues Lys-825 and Lys-850. The segment at 856–885 (APAGSEKSASLTQQYPASGESKTKDESQSL) is disordered. Residues 862–871 (KSASLTQQYP) are compositionally biased toward polar residues. Residues Lys-877 and Lys-879 each participate in a glycyl lysine isopeptide (Lys-Gly) (interchain with G-Cter in SUMO2) cross-link. The GATA-type zinc finger occupies 896–920 (CANCLTTKTSLWRKNANGGYVCNAC). Glycyl lysine isopeptide (Lys-Gly) (interchain with G-Cter in SUMO2) cross-links involve residues Lys-925, Lys-937, and Lys-965. Polar residues predominate over residues 961–977 (EQLNKQQRGSGEEQVNG). Residues 961 to 1000 (EQLNKQQRGSGEEQVNGSPLERRSEDHLSESHPREIPLPS) form a disordered region. A Phosphoserine modification is found at Ser-978. Residues 980–995 (LERRSEDHLSESHPRE) show a composition bias toward basic and acidic residues. The interval 985 to 1184 (EDHLSESHPR…PTANGASKEK (200 aa)) is mediates interaction with RNF4. Glycyl lysine isopeptide (Lys-Gly) (interchain with G-Cter in SUMO2) cross-links involve residues Lys-1003, Lys-1012, Lys-1030, and Lys-1040. Polar residues predominate over residues 1040-1049 (KSPQESTGDP). The disordered stretch occupies residues 1040–1078 (KSPQESTGDPGNSSSVSDGKGSSERGSPIEKYMRPAKHP). A Phosphoserine modification is found at Ser-1041. Low complexity predominate over residues 1050–1059 (GNSSSVSDGK). The segment covering 1060–1072 (GSSERGSPIEKYM) has biased composition (basic and acidic residues). Residue Ser-1066 is modified to Phosphoserine. Lys-1070 participates in a covalent cross-link: Glycyl lysine isopeptide (Lys-Gly) (interchain with G-Cter in SUMO2). At Ser-1085 the chain carries Phosphoserine. Positions 1163–1281 (PLDLAIKHSR…QAEKNGKPKE (119 aa)) are transcriptional repressor domain. Residues 1169 to 1195 (KHSRPGPTANGASKEKTKAPPTVKNED) are disordered. Residues Lys-1192 and Lys-1201 each participate in a glycyl lysine isopeptide (Lys-Gly) (interchain with G-Cter in SUMO2); alternate cross-link. Glycyl lysine isopeptide (Lys-Gly) (interchain with G-Cter in SUMO); alternate cross-links involve residues Lys-1192 and Lys-1201. Residue Lys-1201 forms a Glycyl lysine isopeptide (Lys-Gly) (interchain with G-Cter in SUMO1); alternate linkage. 2 consecutive C2H2-type zinc fingers follow at residues 1215 to 1237 (TKCV…MSCH) and 1243 to 1267 (FQCS…RGLH).

Interacts with RNF4; regulates TRPS1 repressor activity. Interacts specifically with the activator form of GLI3 (GLI3A) but not with the repressor form (GLI3R). Post-translationally, sumoylated. Sumoylation in the repressor domain inhibits the transcription repression activity. Sumoylation on Lys-1201 is the major site. Appears to be sumoylated on multiple sites. In the embryo, expression is detected in both visceral and skeletal tissues. Found in the maxilla, mandible, snout, prospective phalanges and in the femoral head within the developing hip. Also expressed in the hair follicles.

Its subcellular location is the nucleus. Transcriptional repressor. Binds specifically to GATA sequences and represses expression of GATA-regulated genes at selected sites and stages in vertebrate development. Regulates chondrocyte proliferation and differentiation. Executes multiple functions in proliferating chondrocytes, expanding the region of distal chondrocytes, activating proliferation in columnar cells and supporting the differentiation of columnar into hypertrophic chondrocytes. This is Zinc finger transcription factor Trps1 (Trps1) from Mus musculus (Mouse).